Reading from the N-terminus, the 122-residue chain is Large ribosomal subunit protein uL14 (122 aa).

The protein belongs to the universal ribosomal protein uL14 family. In terms of assembly, part of the 50S ribosomal subunit. Forms a cluster with proteins L3 and L19. In the 70S ribosome, L14 and L19 interact and together make contacts with the 16S rRNA in bridges B5 and B8.

In terms of biological role, binds to 23S rRNA. Forms part of two intersubunit bridges in the 70S ribosome. This is Large ribosomal subunit protein uL14 from Staphylococcus epidermidis (strain ATCC 35984 / DSM 28319 / BCRC 17069 / CCUG 31568 / BM 3577 / RP62A).